A 196-amino-acid chain; its full sequence is MSNIKLIVGLANPGAEYAQTRHNAGAWYVDLLARSHNQSLKEESKFFGYTARINICGHDVRLLVPTTFMNLSGKSVVALASFYRIQPDEILVAHDELDLPPGVAKMKLGGSHGGHNGLKDIQNKFGNNPNFYRLRIGIGHPGDKNKVVGFVLGKPPASEQQLIDDAIDEARRCTDILMKQDMDKAINRLHSFKASV.

Y17 contacts tRNA. H22 acts as the Proton acceptor in catalysis. TRNA-binding residues include F68, N70, and N116.

It belongs to the PTH family. Monomer.

Its subcellular location is the cytoplasm. It catalyses the reaction an N-acyl-L-alpha-aminoacyl-tRNA + H2O = an N-acyl-L-amino acid + a tRNA + H(+). Hydrolyzes ribosome-free peptidyl-tRNAs (with 1 or more amino acids incorporated), which drop off the ribosome during protein synthesis, or as a result of ribosome stalling. Its function is as follows. Catalyzes the release of premature peptidyl moieties from peptidyl-tRNA molecules trapped in stalled 50S ribosomal subunits, and thus maintains levels of free tRNAs and 50S ribosomes. This is Peptidyl-tRNA hydrolase from Photorhabdus laumondii subsp. laumondii (strain DSM 15139 / CIP 105565 / TT01) (Photorhabdus luminescens subsp. laumondii).